Here is a 69-residue protein sequence, read N- to C-terminus: Conotoxin SIVA (69 aa).

The first 21 residues, 1–21, serve as a signal peptide directing secretion; it reads MGMRMMFTVFLLVVLATTVVS. The propeptide occupies 22–38; that stretch reads TPSDRASDGRNAAVHER. Gln39 carries the post-translational modification Pyrrolidone carboxylic acid. Ser45 carries O-linked (HexNAc...) serine glycosylation. Pro55, Pro60, and Pro61 each carry 4-hydroxyproline. Cysteine amide is present on Cys68.

The protein belongs to the conotoxin A superfamily. In terms of processing, contains 3 disulfide bonds. Post-translationally, O-linked glycan consists of Hex3-HexNAc2 pentasaccharide. In terms of tissue distribution, expressed by the venom duct.

It is found in the secreted. Functionally, neurotoxin with probable activity on sodium channel. Induces intense repetitive firing of the frog neuromuscular junction, leading to a tetanic contracture in muscle fiber (spastic paralysis). In vivo, shows the same effect as the whole venom when injected on fish. Intraperitoneal injection into fish induces a period of rapid swimming followed by a spastic paralysis with stiff fibrillating fins. At high doses, the peptide is lethal to both fish and mice. In Conus striatus (Striated cone), this protein is Conotoxin SIVA.